The primary structure comprises 56 residues: Pituitary adenylate cyclase-activating polypeptide (56 aa).

The tract at residues 42-50 (VKKYLAAVL) is important for receptor binding. L50 carries the leucine amide modification.

The protein belongs to the glucagon family. As to quaternary structure, interacts with ADCYAP1R1 (via N-terminal extracellular domain).

The protein localises to the secreted. In terms of biological role, PACAP is a neuropeptide involved in diverse array of physiological processes through activating the PACAP subfamily of class B1 G protein-coupled receptors: VIP receptor 1 (VIPR1), VIP receptor 2 (VIPR2), and PACAP type I receptor (ADCYAP1R1). Exerts neuroprotective and general cytoprotective effects due to anti-apoptotic, anti-inflammatory, and antioxidant actions. The sequence is that of Pituitary adenylate cyclase-activating polypeptide (Adcyap1) from Heloderma suspectum (Gila monster).